Here is a 602-residue protein sequence, read N- to C-terminus: MTTISQKFIRNFSIIAHIDHGKSTLADRFIQLCGGLSEREMKAQVLDSMDIERERGITIKAQSVTLNFKSQDGHFYQLNFIDTPGHVDFSYEVSRSLAACEGALLVVDAAQGVEAQTVATCYTAIEQGLVVLPVLNKIDLPQADPERVIQEIEDVIGIEAHDAIRVSAKEGRCVKELLEQLVVAIPPPVGDPEAPLQALIIDSWFDSYLGVVSLVRVKAGTLRKGDKIRVMSTGKDYYADQIGHFTPKRQPLEELSAGAVGFVVAGIKDIFGAPVGDTLTHAKQSAGSPLPGFKQVKPQVFAGLFPINSEEYEPFREALAKLQLNDAALFYEPESSEALGFGFRCGFLGMLHMEIVQERLEREYNLELITTAPTVSYEILTKQGEMLYVDNPSHLPEPGKIGEIREPIAVANILVPPTYLGAVITLCVEKRGVQKKLLYLSNQVSMTYEIPLSEVVLDFFDRLKSASRGYASLDYSFNHFQAADLVKLDILISGQKVDALATIVHRDLAYTRGRELTERLKDLIPRQMFEVAIQAAIGAKIIARTSVKALRKNVTAKCYGGDITRKRKLLEKQKAGKKRMKQVGKVAIPQEAFLAVLRVKNE.

Residues 7–189 form the tr-type G domain; sequence KFIRNFSIIA…QLVVAIPPPV (183 aa). Residues 19 to 24 and 136 to 139 each bind GTP; these read DHGKST and NKID.

Belongs to the TRAFAC class translation factor GTPase superfamily. Classic translation factor GTPase family. LepA subfamily.

It localises to the cell inner membrane. The catalysed reaction is GTP + H2O = GDP + phosphate + H(+). In terms of biological role, required for accurate and efficient protein synthesis under certain stress conditions. May act as a fidelity factor of the translation reaction, by catalyzing a one-codon backward translocation of tRNAs on improperly translocated ribosomes. Back-translocation proceeds from a post-translocation (POST) complex to a pre-translocation (PRE) complex, thus giving elongation factor G a second chance to translocate the tRNAs correctly. Binds to ribosomes in a GTP-dependent manner. This is Elongation factor 4 from Coxiella burnetii (strain Dugway 5J108-111).